A 312-amino-acid polypeptide reads, in one-letter code: DNA-directed RNA polymerase subunit alpha (312 aa).

Residues 1 to 225 (MIEFEKPNIT…VEHFKVFESA (225 aa)) form an alpha N-terminal domain (alpha-NTD) region. Positions 243 to 312 (KEKKLEMTIE…DLGLSLRQED (70 aa)) are alpha C-terminal domain (alpha-CTD).

The protein belongs to the RNA polymerase alpha chain family. In terms of assembly, homodimer. The RNAP catalytic core consists of 2 alpha, 1 beta, 1 beta' and 1 omega subunit. When a sigma factor is associated with the core the holoenzyme is formed, which can initiate transcription.

It catalyses the reaction RNA(n) + a ribonucleoside 5'-triphosphate = RNA(n+1) + diphosphate. DNA-dependent RNA polymerase catalyzes the transcription of DNA into RNA using the four ribonucleoside triphosphates as substrates. The sequence is that of DNA-directed RNA polymerase subunit alpha from Lactobacillus helveticus (strain DPC 4571).